The primary structure comprises 667 residues: Serine/threonine-protein kinase BUR1 (667 aa).

Residues 60–378 (YKEEEKLGQG…AMSAMKHPFF (319 aa)) form the Protein kinase domain. ATP-binding positions include 66 to 74 (LGQGTFGEV) and K89. D207 (proton acceptor) is an active-site residue. The interval 408–667 (HEAMSQKGPS…SEQKDIADLY (260 aa)) is disordered. Basic and acidic residues predominate over residues 432 to 443 (KFEKKSGIKREQ). Over residues 494–516 (NNHSGSLRNRITPSNMGTHSNPR) the composition is skewed to polar residues. The segment covering 541 to 556 (YNRGYSSSVNSRYNNR) has biased composition (low complexity). 3 stretches are compositionally biased toward polar residues: residues 582-594 (DNNQ…QGHS), 602-611 (SKYNSTQTNI), and 622-632 (NEYNASKLGSQ). Residues 633 to 667 (DTKKNDYPKHSETQKQQNNEEKKIHSEQKDIADLY) are compositionally biased toward basic and acidic residues.

The protein belongs to the protein kinase superfamily. CMGC Ser/Thr protein kinase family. CDC2/CDKX subfamily.

It localises to the nucleus. The enzyme catalyses L-seryl-[protein] + ATP = O-phospho-L-seryl-[protein] + ADP + H(+). It carries out the reaction L-threonyl-[protein] + ATP = O-phospho-L-threonyl-[protein] + ADP + H(+). It catalyses the reaction [DNA-directed RNA polymerase] + ATP = phospho-[DNA-directed RNA polymerase] + ADP + H(+). Functionally, serine/threonine-protein kinase involved in transcription regulation. Phosphorylates the UBC2/RAD6 ubiquitin-conjugating enzyme (E2), leading to monoubiquitination of histone H2B and the silencing of telomeric-associated genes. Also required for histone H3 methylation. Necessary for the recovery from pheromone-induced growth arrest in the cell cycle G1 phase. This Candida glabrata (strain ATCC 2001 / BCRC 20586 / JCM 3761 / NBRC 0622 / NRRL Y-65 / CBS 138) (Yeast) protein is Serine/threonine-protein kinase BUR1 (BUR1).